Here is a 1807-residue protein sequence, read N- to C-terminus: Triacetic acid lactone synthase cle1 (1807 aa).

The 174-residue stretch at 107-280 (LAPLTVIIHI…ANVPVNGRYH (174 aa)) folds into the Starter acyltransferase (SAT) domain. Positions 385–795 (DTSIAIIGAA…GNNTAIIICQ (411 aa)) constitute a Ketosynthase family 3 (KS3) domain. Active-site for beta-ketoacyl synthase activity residues include C540, H675, and H718. Residues 919 to 1176 (SKAVYDSSYH…LGPCIWLEAG (258 aa)) enclose the Malonyl-CoA:ACP transacylase (MAT) domain. The segment at 1272–1398 (PVIDGLISLE…GTVIVDDERT (127 aa)) is N-terminal hotdog fold. The PKS/mFAS DH domain occupies 1272–1573 (PVIDGLISLE…FIRTSTSALQ (302 aa)). The active-site Proton acceptor; for dehydratase activity is the H1304. The tract at residues 1416 to 1573 (TVFSAPRGVA…FIRTSTSALQ (158 aa)) is C-terminal hotdog fold. Catalysis depends on D1475, which acts as the Proton donor; for dehydratase activity. In terms of domain architecture, Carrier 1 spans 1605–1679 (ANVWSLTVNL…IICERITAQT (75 aa)). S1639 is modified (O-(pantetheine 4'-phosphoryl)serine). Positions 1690–1720 (GNSTSNTTSSSSQCTPSSSFESDSDTQATEL) are disordered. Residues 1692 to 1710 (STSNTTSSSSQCTPSSSFE) show a composition bias toward low complexity. One can recognise a Carrier 2 domain in the interval 1721–1797 (SLSAPTMEKV…DLHALVMRRG (77 aa)). S1757 is modified (O-(pantetheine 4'-phosphoryl)serine).

Pantetheine 4'-phosphate is required as a cofactor.

It functions in the pathway secondary metabolite biosynthesis; terpenoid biosynthesis. Its function is as follows. Non-reducing polyketide synthase; part of the cluster A that mediates the biosynthesis of chevalone E and its oxidized derivatives that possess a unique five-membered lactone ring and can synergistically enhance the cytotoxicity of doxorubicin (DOX) in breast cancer cells. Within the pathway, cle1 takes part to the biosynthesis of the molecular scaffold via the synthesis the alpha-pyrone triacetic acid lactone (TAL) from one molecule of acetyl-CoA and two molecules of malonyl-CoA. The molecular scaffold is commonly biosynthesized by a series of enzymes including the non-reducing polyketide synthase (NR-PKS) cle1 that produces the alpha-pyrone triacetic acid lactone (TAL); The membrane-bound prenyltransferase cle5 that accepts TAL as its substrate to perform a C-3 geranylgeranylation reaction, in which the pathway-dedicated GGPS cle6 is required to provide GGPP, the other substrate of cle5; the FAD-dependent monooxygenase Cle3 that forms an (S)-epoxide ring at the terminal olefin of the geranylgeranyl group; and the terpene cyclase Cle7 that catalyzes the cyclization of the prenyl group that yields the pentacyclic pathway intermediate chevalone E. Chevalone E can derivatize into seven new oxidized analogs by the cytochrome P450 monooxygenases cle2 (acting at C-20) and cle4 (acting at C-11 and C-12). The sequence is that of Triacetic acid lactone synthase cle1 from Aspergillus versicolor.